The chain runs to 595 residues: Elongation factor 4 (595 aa).

Positions Lys-2–Thr-183 constitute a tr-type G domain. GTP contacts are provided by residues Asp-14–Thr-19 and Asn-130–Asp-133.

The protein belongs to the TRAFAC class translation factor GTPase superfamily. Classic translation factor GTPase family. LepA subfamily.

The protein resides in the cell inner membrane. The catalysed reaction is GTP + H2O = GDP + phosphate + H(+). In terms of biological role, required for accurate and efficient protein synthesis under certain stress conditions. May act as a fidelity factor of the translation reaction, by catalyzing a one-codon backward translocation of tRNAs on improperly translocated ribosomes. Back-translocation proceeds from a post-translocation (POST) complex to a pre-translocation (PRE) complex, thus giving elongation factor G a second chance to translocate the tRNAs correctly. Binds to ribosomes in a GTP-dependent manner. This Amoebophilus asiaticus (strain 5a2) protein is Elongation factor 4.